Here is a 129-residue protein sequence, read N- to C-terminus: Small ribosomal subunit protein uS11 (129 aa).

This sequence belongs to the universal ribosomal protein uS11 family. In terms of assembly, part of the 30S ribosomal subunit. Interacts with proteins S7 and S18. Binds to IF-3.

Located on the platform of the 30S subunit, it bridges several disparate RNA helices of the 16S rRNA. Forms part of the Shine-Dalgarno cleft in the 70S ribosome. This Bacillus cereus (strain ATCC 14579 / DSM 31 / CCUG 7414 / JCM 2152 / NBRC 15305 / NCIMB 9373 / NCTC 2599 / NRRL B-3711) protein is Small ribosomal subunit protein uS11.